Consider the following 397-residue polypeptide: Elongation factor Tu (397 aa).

Positions 10–206 (KPHVNIGTIG…AVDDSIPEPQ (197 aa)) constitute a tr-type G domain. Positions 19–26 (GHIDHGKT) are G1. 19 to 26 (GHIDHGKT) provides a ligand contact to GTP. Position 26 (Thr26) interacts with Mg(2+). The tract at residues 62 to 66 (GITIS) is G2. The interval 83-86 (DCPG) is G3. GTP-binding positions include 83–87 (DCPGH) and 138–141 (NKAD). Positions 138-141 (NKAD) are G4. Positions 176–178 (SAL) are G5.

Belongs to the TRAFAC class translation factor GTPase superfamily. Classic translation factor GTPase family. EF-Tu/EF-1A subfamily. As to quaternary structure, monomer.

Its subcellular location is the cytoplasm. It carries out the reaction GTP + H2O = GDP + phosphate + H(+). Its function is as follows. GTP hydrolase that promotes the GTP-dependent binding of aminoacyl-tRNA to the A-site of ribosomes during protein biosynthesis. The chain is Elongation factor Tu from Frankia alni (strain DSM 45986 / CECT 9034 / ACN14a).